The sequence spans 880 residues: Alanine--tRNA ligase (880 aa).

Zn(2+) is bound by residues His566, His570, Cys668, and His672.

This sequence belongs to the class-II aminoacyl-tRNA synthetase family. Requires Zn(2+) as cofactor.

It localises to the cytoplasm. It carries out the reaction tRNA(Ala) + L-alanine + ATP = L-alanyl-tRNA(Ala) + AMP + diphosphate. Functionally, catalyzes the attachment of alanine to tRNA(Ala) in a two-step reaction: alanine is first activated by ATP to form Ala-AMP and then transferred to the acceptor end of tRNA(Ala). Also edits incorrectly charged Ser-tRNA(Ala) and Gly-tRNA(Ala) via its editing domain. This Parafrankia sp. (strain EAN1pec) protein is Alanine--tRNA ligase.